Here is a 199-residue protein sequence, read N- to C-terminus: Probable GTP-binding protein EngB (199 aa).

The EngB-type G domain occupies 25–199; that stretch reads IGMEVAFVGY…LKRVLNNWLR (175 aa). Mg(2+) contacts are provided by serine 40 and threonine 62.

It belongs to the TRAFAC class TrmE-Era-EngA-EngB-Septin-like GTPase superfamily. EngB GTPase family. The cofactor is Mg(2+).

Necessary for normal cell division and for the maintenance of normal septation. This chain is Probable GTP-binding protein EngB, found in Blochmanniella pennsylvanica (strain BPEN).